The chain runs to 171 residues: Ribosome maturation factor RimM (171 aa).

The region spanning 96–170 (PDSYYHFQLE…TMTVRLPDGL (75 aa)) is the PRC barrel domain.

Belongs to the RimM family. As to quaternary structure, binds ribosomal protein uS19.

The protein resides in the cytoplasm. An accessory protein needed during the final step in the assembly of 30S ribosomal subunit, possibly for assembly of the head region. Essential for efficient processing of 16S rRNA. May be needed both before and after RbfA during the maturation of 16S rRNA. It has affinity for free ribosomal 30S subunits but not for 70S ribosomes. The polypeptide is Ribosome maturation factor RimM (Heliobacterium modesticaldum (strain ATCC 51547 / Ice1)).